A 363-amino-acid polypeptide reads, in one-letter code: MAFEIPEDSTQLSQFVTLLIFTPLGIVVTALRFVAVRRVTRKVGFEDWLAVIATIFFILTNLAGLMAISILNGRQLTQEVIESPSDYSRMRKWDIAGLFFYFAQTLSVKLSILAFYHRIFGISSTRCRICIYLLAAAQTILFIAFCIFQGFQCIPLQRYFDLSVPGECKDEGTVILGGELPNSLVDFAMVILAMIMIRPLQLSFSDKFRVTVLFGLGFVVGIIGFVKIAVTYSTSELYAFSMIALWTGVQMFTALLCCSLPMYNTFLPIVADFWNRLSHHSLGWVSRVRSSQSSSKNSRKHGPYDSDQSPGPGWDDLVAYNGTKGLTLPQAPYHGDNHALGNVSPITHPQAYSKQTTRQFDVV.

The next 7 helical transmembrane spans lie at 15–35 (FVTLLIFTPLGIVVTALRFVA), 48–68 (WLAVIATIFFILTNLAGLMAI), 95–115 (IAGLFFYFAQTLSVKLSILAF), 129–149 (ICIYLLAAAQTILFIAFCIFQ), 175–195 (ILGGELPNSLVDFAMVILAMI), 210–230 (VTVLFGLGFVVGIIGFVKIAV), and 237–257 (LYAFSMIALWTGVQMFTALLC). The interval 293–312 (SSSKNSRKHGPYDSDQSPGP) is disordered. Asn-321 carries N-linked (GlcNAc...) asparagine glycosylation. The interval 344–363 (SPITHPQAYSKQTTRQFDVV) is disordered.

Belongs to the SAT4 family.

It localises to the membrane. It participates in secondary metabolite biosynthesis. Functionally, part of the gene cluster that mediates the biosynthesis of wortmanamides A and B, reduced long-chain polyketides amidated with a specific omega-amino acid, 5-aminopentanoic acid (5PA). The PKS modules of TwmB are involved in the synthesis of the polyketide backbone, whereas the non-canonical C domain of TwmB is a bonafide condensation domain that specifically selects 5PA and catalyzes amidation to release polyketide chain. The C domain clearly prefers C16 and C18 fatty acyl substrates, which is consistent with simultaneous formation of both octaketide and nonaketide acyl amides wortmanamides A and B. Because TwmB lacks a designated enoylreductase (ER) domain, the required activity is provided the enoyl reductase TwmE. The roles of the remaining enzymes have still to be clarified. This Talaromyces wortmannii (Penicillium wortmannii) protein is Wortmanamides biosynthesis cluster protein C.